The sequence spans 570 residues: Vacuolar protein sorting-associated protein 45 (570 aa).

Residues Ser-307 and Ser-441 each carry the phosphoserine modification.

Belongs to the STXBP/unc-18/SEC1 family. As to quaternary structure, interacts with STX6. Interacts with ZFYVE20. In terms of tissue distribution, ubiquitous. Expression was highest in testis, heart and brain, intermediate in kidney, spleen, prostate, ovary, small intestine and thymus and low in lung, skeletal muscle, placenta, colon, pancreas, peripheral blood leukocytes and liver.

Its subcellular location is the golgi apparatus membrane. It localises to the endosome membrane. In terms of biological role, may play a role in vesicle-mediated protein trafficking from the Golgi stack through the trans-Golgi network. This is Vacuolar protein sorting-associated protein 45 (VPS45) from Homo sapiens (Human).